A 394-amino-acid chain; its full sequence is S-adenosylmethionine synthase 1 (394 aa).

Glu-11 lines the Mg(2+) pocket. Residue His-17 participates in ATP binding. K(+) is bound at residue Glu-45. Residues Glu-58 and Gln-101 each coordinate L-methionine. Residues 169–171, 237–240, Asp-248, 254–255, Ala-271, Lys-275, and Lys-279 each bind ATP; these read DGK, SGRF, and RK. Asp-248 provides a ligand contact to L-methionine. L-methionine is bound at residue Lys-279.

This sequence belongs to the AdoMet synthase family. As to quaternary structure, homotetramer. Mn(2+) serves as cofactor. Mg(2+) is required as a cofactor. Requires Co(2+) as cofactor. It depends on K(+) as a cofactor.

It localises to the cytoplasm. It catalyses the reaction L-methionine + ATP + H2O = S-adenosyl-L-methionine + phosphate + diphosphate. It functions in the pathway amino-acid biosynthesis; S-adenosyl-L-methionine biosynthesis; S-adenosyl-L-methionine from L-methionine: step 1/1. In terms of biological role, catalyzes the formation of S-adenosylmethionine from methionine and ATP. The reaction comprises two steps that are both catalyzed by the same enzyme: formation of S-adenosylmethionine (AdoMet) and triphosphate, and subsequent hydrolysis of the triphosphate. The sequence is that of S-adenosylmethionine synthase 1 (SAM1) from Hordeum vulgare (Barley).